A 2027-amino-acid polypeptide reads, in one-letter code: Citron Rho-interacting kinase (2027 aa).

Met1 is modified (N-acetylmethionine). One can recognise a Protein kinase domain in the interval Phe97 to Phe360. Residues Val103–Val111 and Lys126 contribute to the ATP site. Asp221 (proton acceptor) is an active-site residue. Residues Ser361 to Ser431 form the AGC-kinase C-terminal domain. Residues Ser433, Ser440, Ser480, and Ser582 each carry the phosphoserine modification. Residues Ile453–Lys1297 are a coiled coil. Residues Leu1091–Pro1302 are interaction with Rho/Rac. Tyr1196 carries the phosphotyrosine modification. Basic and acidic residues predominate over residues Arg1290–His1303. Disordered stretches follow at residues Arg1290 to Ala1310 and Ser1322 to Arg1351. Residues Pro1327–Ser1337 show a composition bias toward low complexity. Residues Arg1339–Arg1351 are compositionally biased toward basic and acidic residues. A Phorbol-ester/DAG-type zinc finger spans residues Pro1362 to Cys1411. The region spanning Ser1443–Ala1563 is the PH domain. The CNH domain occupies Arg1591–Gly1881. Lys1721 is subject to N6-acetyllysine. Positions Glu1905–Arg2012 are disordered. At Ser1940 the chain carries Phosphoserine. A compositionally biased stretch (basic and acidic residues) spans Ser1948–Arg2003. The SH3-binding signature appears at Pro1953–Arg1958. Phosphoserine is present on Ser1993. The residue at position 2013 (Thr2013) is a Phosphothreonine.

It belongs to the protein kinase superfamily. AGC Ser/Thr protein kinase family. As to quaternary structure, directly interacts with KIF14 depending on the activation state (stronger interaction with the kinase-dead form). Homodimer. Interacts with TTC3.

It localises to the cytoplasm. The enzyme catalyses L-seryl-[protein] + ATP = O-phospho-L-seryl-[protein] + ADP + H(+). It catalyses the reaction L-threonyl-[protein] + ATP = O-phospho-L-threonyl-[protein] + ADP + H(+). Its function is as follows. Plays a role in cytokinesis. Required for KIF14 localization to the central spindle and midbody. Putative RHO/RAC effector that binds to the GTP-bound forms of RHO and RAC1. It probably binds p21 with a tighter specificity in vivo. Displays serine/threonine protein kinase activity. Plays an important role in the regulation of cytokinesis and the development of the central nervous system. Phosphorylates MYL9/MLC2. This Homo sapiens (Human) protein is Citron Rho-interacting kinase (CIT).